Reading from the N-terminus, the 140-residue chain is Calcitonin (140 aa).

The signal sequence occupies residues 1–25; it reads MGFWKFSPFLPLSILVLYQVGIIQA. A propeptide spanning residues 26-81 is cleaved from the precursor; it reads APFRSALESLPDPAVLPEEESRLLLAALVKDYVQMKVRALEQEQETGGASLDSPRA. Cys84 and Cys90 are oxidised to a cystine. Position 115 is a proline amide (Pro115). Residues 120 to 140 constitute a propeptide that is removed on maturation; the sequence is VMARGLERDHGPHIGTSQDAY.

It belongs to the calcitonin family.

It is found in the secreted. Calcitonin is a peptide hormone that causes a rapid but short-lived drop in the level of calcium and phosphate in blood by promoting the incorporation of those ions in the bones. Calcitonin function is mediated by the calcitonin receptor/CALCR and the CALCR-RAMP2 (AMYR2) receptor complex. The chain is Calcitonin (CALCA) from Equus caballus (Horse).